A 623-amino-acid polypeptide reads, in one-letter code: GATA zinc finger domain-containing protein 6 (623 aa).

Disordered regions lie at residues 137 to 156 (IISP…GNNF), 167 to 197 (INNN…TAST), and 245 to 289 (PTTT…TAST). A compositionally biased stretch (low complexity) spans 167-179 (INNNSNNNNNNNN). Residues 185-197 (KQQTSKGSATAST) show a composition bias toward polar residues. A GATA-type zinc finger spans residues 320-345 (CHSCGETQTSQWRRGPDGCKSLCNAC). The segment at 398-509 (IQQQQQKDDH…SINHNDKLIN (112 aa)) is disordered. The segment covering 410–482 (LSRPSSFSSQ…TSPTISSESL (73 aa)) has biased composition (low complexity). Residues 483 to 502 (NFSSATNTPTNLSPNLQSIN) are compositionally biased toward polar residues.

This Dictyostelium discoideum (Social amoeba) protein is GATA zinc finger domain-containing protein 6 (gtaF).